Reading from the N-terminus, the 259-residue chain is NADP-dependent 3-hydroxy acid dehydrogenase (259 aa).

Isoleucine 11 contacts NADP(+). Serine 42 carries the phosphoserine modification. The residue at position 43 (threonine 43) is a Phosphothreonine. NADP(+) is bound by residues aspartate 65, asparagine 92, arginine 126, tyrosine 158, lysine 162, and valine 191. Tyrosine 158 serves as the catalytic Proton acceptor. Catalysis depends on lysine 162, which acts as the Lowers pKa of active site Tyr.

Belongs to the short-chain dehydrogenases/reductases (SDR) family. As to quaternary structure, homotetramer.

It localises to the cytoplasm. It is found in the nucleus. It carries out the reaction L-allo-threonine + NADP(+) = aminoacetone + CO2 + NADPH. NADP-dependent dehydrogenase with broad substrate specificity acting on 3-hydroxy acids. Catalyzes the NADP-dependent oxidation of L-allo-threonine to L-2-amino-3-keto-butyrate, which is spontaneously decarboxylated into aminoacetone. Also acts on D-threonine, L-serine, D-serine, D-3-hydroxyisobutyrate, L-3-hydroxyisobutyrate, D-glycerate and L-glycerate. This Schizosaccharomyces pombe (strain 972 / ATCC 24843) (Fission yeast) protein is NADP-dependent 3-hydroxy acid dehydrogenase.